The chain runs to 310 residues: Protease HtpX homolog (310 aa).

Transmembrane regions (helical) follow at residues 16–36 (NAVL…VDVI) and 55–75 (IFPT…VVCI). H166 serves as a coordination point for Zn(2+). E167 is an active-site residue. Position 170 (H170) interacts with Zn(2+). The next 2 helical transmembrane spans lie at 182 to 202 (VGIL…FFMG) and 214 to 234 (MILL…QMYL). E239 lines the Zn(2+) pocket.

Belongs to the peptidase M48B family. Zn(2+) serves as cofactor.

The protein resides in the cell inner membrane. In Helicobacter pylori (strain Shi470), this protein is Protease HtpX homolog.